A 253-amino-acid chain; its full sequence is tRNA (guanine-N(7)-)-methyltransferase (253 aa).

Positions 1-12 are enriched in pro residues; sequence MSQTPMPQPDQA. The interval 1–39 is disordered; the sequence is MSQTPMPQPDQAPPVDVGQPVDEAEAKRRRFKTHGRKKG. Residues 27–39 show a composition bias toward basic residues; it reads KRRRFKTHGRKKG. Glu-84, Asp-109, Asn-136, and Asp-159 together coordinate S-adenosyl-L-methionine. Residue Asp-159 is part of the active site. Residues Lys-163, Asp-195, and 232–235 contribute to the substrate site; that span reads TNFE.

It belongs to the class I-like SAM-binding methyltransferase superfamily. TrmB family.

It catalyses the reaction guanosine(46) in tRNA + S-adenosyl-L-methionine = N(7)-methylguanosine(46) in tRNA + S-adenosyl-L-homocysteine. Its pathway is tRNA modification; N(7)-methylguanine-tRNA biosynthesis. Functionally, catalyzes the formation of N(7)-methylguanine at position 46 (m7G46) in tRNA. The sequence is that of tRNA (guanine-N(7)-)-methyltransferase from Magnetococcus marinus (strain ATCC BAA-1437 / JCM 17883 / MC-1).